A 2430-amino-acid polypeptide reads, in one-letter code: Protein TASOR 2 (2430 aa).

A phosphoserine mark is found at serine 19, serine 219, and serine 384. Disordered stretches follow at residues leucine 416–alanine 488 and arginine 577–serine 648. At serine 685 the chain carries Phosphoserine. The tract at residues leucine 704–valine 727 is disordered. Residues proline 710–proline 723 are compositionally biased toward basic and acidic residues. Residues serine 1025, serine 1087, and serine 1172 each carry the phosphoserine modification. Residues leucine 1331–lysine 1360 form a disordered region. Serine 1541 is subject to Phosphoserine. The tract at residues glutamate 1700–arginine 1727 is disordered. Polar residues predominate over residues glycine 1714–leucine 1723. Serine 1848 is subject to Phosphoserine. A Glycyl lysine isopeptide (Lys-Gly) (interchain with G-Cter in SUMO2) cross-link involves residue lysine 2007. 4 positions are modified to phosphoserine: serine 2009, serine 2037, serine 2062, and serine 2066. Residues serine 2046 to tryptophan 2069 are disordered.

It belongs to the TASOR family.

The sequence is that of Protein TASOR 2 from Homo sapiens (Human).